Reading from the N-terminus, the 474-residue chain is Homocitrate synthase, mitochondrial (474 aa).

The Pyruvate carboxyltransferase domain maps to phenylalanine 67–lysine 320. Arginine 75 contributes to the 2-oxoglutarate binding site. Glutamate 76 is a Mg(2+) binding site. Residues histidine 135, arginine 195, and threonine 229 each contribute to the 2-oxoglutarate site. Residues histidine 256 and histidine 258 each coordinate Mg(2+). The Proton acceptor role is filled by histidine 353.

The protein belongs to the alpha-IPM synthase/homocitrate synthase family. Homocitrate synthase LYS20/LYS21 subfamily. It depends on Mg(2+) as a cofactor. Requires Mn(2+) as cofactor.

The protein resides in the mitochondrion. It carries out the reaction acetyl-CoA + 2-oxoglutarate + H2O = (2R)-homocitrate + CoA + H(+). It participates in amino-acid biosynthesis; L-lysine biosynthesis via AAA pathway; L-alpha-aminoadipate from 2-oxoglutarate: step 1/5. Catalyzes the aldol-type condensation of 2-oxoglutarate with acetyl-CoA to yield homocitrate. Carries out the first step of the alpha-aminoadipate (AAA) lysine biosynthesis pathway. The chain is Homocitrate synthase, mitochondrial (lys1) from Penicillium rubens (strain ATCC 28089 / DSM 1075 / NRRL 1951 / Wisconsin 54-1255) (Penicillium chrysogenum).